The chain runs to 432 residues: Glutamyl-tRNA reductase (432 aa).

Residues 49–52, Ser107, 112–114, and Gln118 contribute to the substrate site; these read TCNR and ETQ. The active-site Nucleophile is the Cys50. 186-191 provides a ligand contact to NADP(+); sequence GAGEMG.

Belongs to the glutamyl-tRNA reductase family. Homodimer.

It carries out the reaction (S)-4-amino-5-oxopentanoate + tRNA(Glu) + NADP(+) = L-glutamyl-tRNA(Glu) + NADPH + H(+). The protein operates within porphyrin-containing compound metabolism; protoporphyrin-IX biosynthesis; 5-aminolevulinate from L-glutamyl-tRNA(Glu): step 1/2. Its function is as follows. Catalyzes the NADPH-dependent reduction of glutamyl-tRNA(Glu) to glutamate 1-semialdehyde (GSA). This Campylobacter jejuni subsp. jejuni serotype O:2 (strain ATCC 700819 / NCTC 11168) protein is Glutamyl-tRNA reductase.